The primary structure comprises 235 residues: Rab-like protein 3 (235 aa).

The tract at residues 1–235 (MASLDRVKVL…GGNFKSLHYD (235 aa)) is small GTPase-like. GTP contacts are provided by residues 16-21 (GVGKSS), 148-150 (KLD), and 179-180 (DC).

The protein belongs to the small GTPase superfamily. Rab family. As to quaternary structure, homodimer.

Its function is as follows. Required for KRAS signaling regulation and modulation of cell proliferation. Regulator of KRAS prenylation, and probably prenylation of other small GTPases. Required for lymphocyte development and function. Not required for myeloid cell development. This chain is Rab-like protein 3 (rabl3), found in Xenopus tropicalis (Western clawed frog).